Consider the following 740-residue polypeptide: DNA-directed RNA polymerase subunit beta' (740 aa).

Residues C65, C67, C103, and C106 each contribute to the Zn(2+) site. The Mg(2+) site is built by D539, D541, and D543.

It belongs to the RNA polymerase beta' chain family. RpoC1 subfamily. In plastids the minimal PEP RNA polymerase catalytic core is composed of four subunits: alpha, beta, beta', and beta''. When a (nuclear-encoded) sigma factor is associated with the core the holoenzyme is formed, which can initiate transcription. The cofactor is Mg(2+). Zn(2+) is required as a cofactor.

It is found in the plastid. Its subcellular location is the chloroplast. The enzyme catalyses RNA(n) + a ribonucleoside 5'-triphosphate = RNA(n+1) + diphosphate. Its function is as follows. DNA-dependent RNA polymerase catalyzes the transcription of DNA into RNA using the four ribonucleoside triphosphates as substrates. The polypeptide is DNA-directed RNA polymerase subunit beta' (Ostreococcus tauri).